We begin with the raw amino-acid sequence, 418 residues long: NADH-quinone oxidoreductase subunit D (418 aa).

The protein belongs to the complex I 49 kDa subunit family. In terms of assembly, NDH-1 is composed of 14 different subunits. Subunits NuoB, C, D, E, F, and G constitute the peripheral sector of the complex.

Its subcellular location is the cell inner membrane. It catalyses the reaction a quinone + NADH + 5 H(+)(in) = a quinol + NAD(+) + 4 H(+)(out). Functionally, NDH-1 shuttles electrons from NADH, via FMN and iron-sulfur (Fe-S) centers, to quinones in the respiratory chain. The immediate electron acceptor for the enzyme in this species is believed to be ubiquinone. Couples the redox reaction to proton translocation (for every two electrons transferred, four hydrogen ions are translocated across the cytoplasmic membrane), and thus conserves the redox energy in a proton gradient. In Neisseria meningitidis serogroup B (strain ATCC BAA-335 / MC58), this protein is NADH-quinone oxidoreductase subunit D.